Consider the following 828-residue polypeptide: Zinc finger protein 438 (828 aa).

Disordered stretches follow at residues 1–29 (MQNS…KGLQ), 143–173 (KSGC…LYKP), and 193–231 (ALTN…PAKQ). 2 stretches are compositionally biased toward polar residues: residues 16-29 (NIPS…KGLQ) and 150-159 (PAQTQMCPQM). 3 consecutive C2H2-type zinc fingers follow at residues 507 to 529 (HRCH…MNTH), 535 to 557 (YSCR…MKLH), and 567 to 590 (MCCE…KEVH). Residues 680-721 (EGTFPGSKGTQEELVQHASPDWKRHPERGKPEKVHSSSEESH) form a disordered region. Basic and acidic residues predominate over residues 689-721 (TQEELVQHASPDWKRHPERGKPEKVHSSSEESH). Residues 776 to 799 (FNCLLCAEMLGRKEDLLHHWKHQH) form a C2H2-type 4 zinc finger.

This sequence belongs to the krueppel C2H2-type zinc-finger protein family. Ubiquitous.

It is found in the nucleus. Its function is as follows. Isoform 1 acts as a transcriptional repressor. The sequence is that of Zinc finger protein 438 (ZNF438) from Homo sapiens (Human).